The following is a 196-amino-acid chain: Ribosome maturation factor RimP (196 aa).

Positions 131 to 145 (KKKAGKKSQGKKAGK) are enriched in basic residues. Residues 131–153 (KKKAGKKSQGKKAGKKTPQAPVQ) form a disordered region.

This sequence belongs to the RimP family.

The protein resides in the cytoplasm. Functionally, required for maturation of 30S ribosomal subunits. This Corynebacterium urealyticum (strain ATCC 43042 / DSM 7109) protein is Ribosome maturation factor RimP.